A 360-amino-acid polypeptide reads, in one-letter code: Phenylalanine--tRNA ligase alpha subunit (360 aa).

A Mg(2+)-binding site is contributed by Glu-260.

It belongs to the class-II aminoacyl-tRNA synthetase family. Phe-tRNA synthetase alpha subunit type 1 subfamily. In terms of assembly, tetramer of two alpha and two beta subunits. It depends on Mg(2+) as a cofactor.

The protein localises to the cytoplasm. The enzyme catalyses tRNA(Phe) + L-phenylalanine + ATP = L-phenylalanyl-tRNA(Phe) + AMP + diphosphate + H(+). The chain is Phenylalanine--tRNA ligase alpha subunit from Rhizobium etli (strain ATCC 51251 / DSM 11541 / JCM 21823 / NBRC 15573 / CFN 42).